The primary structure comprises 209 residues: Guanylate kinase (209 aa).

In terms of domain architecture, Guanylate kinase-like spans 7–185 (GNLYIVAAPS…AAMELQSIVI (179 aa)). ATP is bound at residue 14–21 (APSGGGKT).

It belongs to the guanylate kinase family.

It localises to the cytoplasm. It carries out the reaction GMP + ATP = GDP + ADP. Essential for recycling GMP and indirectly, cGMP. The protein is Guanylate kinase of Legionella pneumophila (strain Paris).